The primary structure comprises 468 residues: GDNF family receptor alpha-1 (468 aa).

Positions 1-24 (MFLATLYFALPLLDLLMSAEVSGG) are cleaved as a signal peptide. 3 repeat units span residues 25–113 (DRLD…LQGN), 150–238 (KGNN…YEER), and 239–342 (ERPN…KNAI). Cys-36 and Cys-42 are joined by a disulfide. An N-linked (GlcNAc...) asparagine glycan is attached at Asn-59. Intrachain disulfides connect Cys-154/Cys-214, Cys-161/Cys-167, Cys-178/Cys-192, Cys-187/Cys-233, Cys-216/Cys-221, Cys-243/Cys-313, Cys-250/Cys-256, Cys-267/Cys-285, Cys-277/Cys-337, and Cys-315/Cys-325. 2 N-linked (GlcNAc...) asparagine glycosylation sites follow: Asn-347 and Asn-406. A lipid anchor (GPI-anchor amidated serine) is attached at Ser-430. A propeptide spans 431–468 (HITTKSMAAPPSCSLSSLPVLMLTALAALLSVSLAETS) (removed in mature form).

This sequence belongs to the GDNFR family. Interacts with GDNF ligand and RET: forms a 2:2:2 ternary complex composed of GDNF ligand, GFRA1 and RET receptor. Interacts with SORL1, either alone or in complex with GDNF. Interaction between SORL1 and GFRA1 leads to GFRA1 internalization, but not degradation. In terms of tissue distribution, expressed in liver, brain, kidney and cochlea.

The protein localises to the cell membrane. It localises to the golgi apparatus. Its subcellular location is the trans-Golgi network. The protein resides in the endosome. It is found in the multivesicular body. In terms of biological role, coreceptor for GDNF, a neurotrophic factor that enhances survival and morphological differentiation of dopaminergic neurons and increases their high-affinity dopamine uptake. GDNF-binding leads to autophosphorylation and activation of the RET receptor. This Rattus norvegicus (Rat) protein is GDNF family receptor alpha-1 (Gfra1).